The sequence spans 37 residues: Large ribosomal subunit protein bL36c (37 aa).

Belongs to the bacterial ribosomal protein bL36 family.

It localises to the plastid. It is found in the chloroplast. This Pelargonium hortorum (Common geranium) protein is Large ribosomal subunit protein bL36c.